The chain runs to 134 residues: DNA-binding protein inhibitor ID-2 (134 aa).

Residues Ser14 and Ser25 each carry the phosphoserine modification. Residues 23–75 (SRSKTPVDDPMSLLYNMNDCYSKLKELVPSIPQNKKVSKMEILQHVIDYILDL) form the bHLH domain. The short motif at 106–115 (LNTDISILSL) is the Nuclear export signal element.

Interacts with GATA4 and NKX2-5. Interacts with NR0B2. Interacts with CLOCK and BMAL1. Interacts with IFI204. Interacts with NEDD9/HEF1. Interacts with ASB4; this interaction promotes ID2 proteasomal degradation. Post-translationally, ubiquitinated in a ASB4-depedent manner, leading to proteasomal degradation. Phosphorylated in vitro by CDK1, PKA and PKC. In terms of tissue distribution, highly expressed in early fetal tissues, including those of the central nervous system.

Its subcellular location is the cytoplasm. It is found in the nucleus. Transcriptional regulator (lacking a basic DNA binding domain) which negatively regulates the basic helix-loop-helix (bHLH) transcription factors by forming heterodimers and inhibiting their DNA binding and transcriptional activity. Implicated in regulating a variety of cellular processes, including cellular growth, senescence, differentiation, apoptosis, angiogenesis, and neoplastic transformation. Inhibits skeletal muscle and cardiac myocyte differentiation. Regulates the circadian clock by repressing the transcriptional activator activity of the CLOCK-BMAL1 heterodimer. Restricts the CLOCK and BMAL1 localization to the cytoplasm. Plays a role in both the input and output pathways of the circadian clock: in the input component, is involved in modulating the magnitude of photic entrainment and in the output component, contributes to the regulation of a variety of liver clock-controlled genes involved in lipid metabolism. In Homo sapiens (Human), this protein is DNA-binding protein inhibitor ID-2 (ID2).